The chain runs to 152 residues: MKSERQQKILEIIQNEDIETQEELVERLKALGYDVTQATVSRDIKELRLTKVLTETGKYKYAVLSGPEANITEKLIKVFSESIVKYDTADNLVIIKTITGAAQGAAAAIDSLSWPEVVGTIAGDDTIFIATKGSAAADKIVERIKAIISQGE.

Belongs to the ArgR family.

It is found in the cytoplasm. It functions in the pathway amino-acid biosynthesis; L-arginine biosynthesis [regulation]. In terms of biological role, regulates arginine biosynthesis genes. This Caldicellulosiruptor bescii (strain ATCC BAA-1888 / DSM 6725 / KCTC 15123 / Z-1320) (Anaerocellum thermophilum) protein is Arginine repressor.